The sequence spans 528 residues: Cytochrome b5 reductase 4 (528 aa).

Methionine 1 is modified (N-acetylmethionine). The tract at residues 1 to 29 is disordered; that stretch reads MLNVPSQAFPAPGSQQRVSSQGRSKVPLK. Low complexity predominate over residues 13–24; that stretch reads GSQQRVSSQGRS. Positions 54–130 constitute a Cytochrome b5 heme-binding domain; sequence LIEVTEEELK…LKECLVGRMA (77 aa). Histidine 89 and histidine 112 together coordinate heme. Positions 172–263 constitute a CS domain; sequence LSSPSYDWFQ…KESVSWQCLG (92 aa). An FAD-binding FR-type domain is found at 280 to 392; it reads LYYRRCQLIS…SGPEGDFKVS (113 aa). FAD-binding positions include 372–387 and 399–431; these read DRLQ…GPEG and DLFL…KVKL.

The protein belongs to the flavoprotein pyridine nucleotide cytochrome reductase family. It depends on FAD as a cofactor. As to expression, ubiquitously expressed. Isoform 2 is expressed in testis, brain, skeletal muscle and in the male germline.

It localises to the endoplasmic reticulum. It catalyses the reaction 2 Fe(III)-[cytochrome b5] + NADH = 2 Fe(II)-[cytochrome b5] + NAD(+) + H(+). Functionally, NADH-cytochrome b5 reductase involved in endoplasmic reticulum stress response pathway. Plays a critical role in protecting pancreatic beta-cells against oxidant stress, possibly by protecting the cell from excess buildup of reactive oxygen species (ROS). In Mus musculus (Mouse), this protein is Cytochrome b5 reductase 4 (Cyb5r4).